The chain runs to 311 residues: Salutaridine reductase (311 aa).

An NADP(+)-binding site is contributed by 17 to 40 (VTGGNKGIGFEICKQLSSSGIMVV). Residue S180 participates in substrate binding. Y236 (proton acceptor) is an active-site residue.

This sequence belongs to the short-chain dehydrogenases/reductases (SDR) family.

It carries out the reaction (7S)-salutaridinol + NADP(+) = salutaridine + NADPH + H(+). With respect to regulation, subject to substrate inhibition at salutaridine concentrations higher than 20 to 30 uM. Its function is as follows. Involved in biosynthesis of morphinan-type benzylisoquinoline alkaloids. Catalyzes the stereospecific conversion of salutaridine to salutaridinol. The sequence is that of Salutaridine reductase from Papaver bracteatum (Great scarlet poppy).